A 402-amino-acid chain; its full sequence is CCA-adding enzyme (402 aa).

Residues glycine 32 and arginine 35 each coordinate ATP. CTP contacts are provided by glycine 32 and arginine 35. Positions 45 and 47 each coordinate Mg(2+). Positions 116, 159, 162, 165, and 168 each coordinate ATP. CTP is bound by residues arginine 116, aspartate 159, arginine 162, arginine 165, and arginine 168.

This sequence belongs to the tRNA nucleotidyltransferase/poly(A) polymerase family. Bacterial CCA-adding enzyme type 3 subfamily. In terms of assembly, homodimer. The cofactor is Mg(2+).

The catalysed reaction is a tRNA precursor + 2 CTP + ATP = a tRNA with a 3' CCA end + 3 diphosphate. The enzyme catalyses a tRNA with a 3' CCA end + 2 CTP + ATP = a tRNA with a 3' CCACCA end + 3 diphosphate. Catalyzes the addition and repair of the essential 3'-terminal CCA sequence in tRNAs without using a nucleic acid template. Adds these three nucleotides in the order of C, C, and A to the tRNA nucleotide-73, using CTP and ATP as substrates and producing inorganic pyrophosphate. tRNA 3'-terminal CCA addition is required both for tRNA processing and repair. Also involved in tRNA surveillance by mediating tandem CCA addition to generate a CCACCA at the 3' terminus of unstable tRNAs. While stable tRNAs receive only 3'-terminal CCA, unstable tRNAs are marked with CCACCA and rapidly degraded. The polypeptide is CCA-adding enzyme (Streptococcus pyogenes serotype M2 (strain MGAS10270)).